The chain runs to 291 residues: tRNA dimethylallyltransferase (291 aa).

Residue Gly17–Ser24 coordinates ATP. Position 19 to 24 (Thr19 to Ser24) interacts with substrate.

The protein belongs to the IPP transferase family. In terms of assembly, monomer. Requires Mg(2+) as cofactor.

It carries out the reaction adenosine(37) in tRNA + dimethylallyl diphosphate = N(6)-dimethylallyladenosine(37) in tRNA + diphosphate. Its function is as follows. Catalyzes the transfer of a dimethylallyl group onto the adenine at position 37 in tRNAs that read codons beginning with uridine, leading to the formation of N6-(dimethylallyl)adenosine (i(6)A). The chain is tRNA dimethylallyltransferase from Cereibacter sphaeroides (strain ATCC 17025 / ATH 2.4.3) (Rhodobacter sphaeroides).